A 383-amino-acid chain; its full sequence is Glucose-1-phosphate adenylyltransferase (383 aa).

Alpha-D-glucose 1-phosphate is bound by residues Y99, G164, 179–180, and S190; that span reads EK.

It belongs to the bacterial/plant glucose-1-phosphate adenylyltransferase family. Homotetramer.

The catalysed reaction is alpha-D-glucose 1-phosphate + ATP + H(+) = ADP-alpha-D-glucose + diphosphate. The protein operates within glycan biosynthesis; glycogen biosynthesis. Functionally, involved in the biosynthesis of ADP-glucose, a building block required for the elongation reactions to produce glycogen. Catalyzes the reaction between ATP and alpha-D-glucose 1-phosphate (G1P) to produce pyrophosphate and ADP-Glc. The chain is Glucose-1-phosphate adenylyltransferase from Halalkalibacterium halodurans (strain ATCC BAA-125 / DSM 18197 / FERM 7344 / JCM 9153 / C-125) (Bacillus halodurans).